Consider the following 974-residue polypeptide: MSDDWDNNTAAAKTISFGSNPSGFGGGSGFGSGNTGGFGSGNAGGTGFGSSNNGGSGFGGNNNVGPRFGNGNAGGTGFGSGNAGGTGFGSGNAGGTGFGSGNAGGTGFGSGNAGGTGFGGGNAGGTGFGSGNAGGTGLGSGNAGGTGFGSGNAGGTGFGSGNAGGTGFGSGKAGGTGFGSGKAGGTGFGGNSNSGSGFGSGLTNGFGSGNNHESGFGGGKSGGFGGGNSGGSGFGSGGNSNGFGSGGGGQDRGERNNNCFNCQQPGHRSNDCPEPKKEREPRVCYNCQQPGHNSRDCPEERKPREGRNGFTGGSSGFGGGNGGGTGFDSGLTNGFGSGNNGESGFGSGGFGGNSNGFGSGGGGQDRGERNNNCFNCQQPGHRSNDCPEPKKEREPRVCYNCQQPGHNSRDCPEERKPREGRNGFTSGFGGGNDGGFGGGNAEGFGNNEERGPMKCFNCKGEGHRSAECPEPPRGCFNCGEQGHRSNECPNPAKPREGAEGEGPKATYVPVEDNMEEVFNMQKISEGLMFNKFFDAEVKITSDKKPVGVKTCKTFSEANLGETMKKNVAHAGYTKTTPIQQYTLPLIHQGHDIMACAQTGSGKTAAFLLPIMARLIDENDLNTAGEGGCYPRCIILTPTRELTDQIYNEGRKFAYQTMMEIRPVYGGLAVGYNKGQIEKGATIIVGTVGRIKHFCEEGTIKLDKCRFFVLDEADRMIDAMGFGTDIDTIVNYESMPKKENRQTLMFSATFPDSVQEAARNHLKEGYIMLAIDKIGAANKCVLQEFEKCDRSEKKDKLLEILGIDIDSYTTEKNSEVYTKKTIVFVSQRAMADTLASILSSAQVPAITIHGAREQRERSEALRQFRNGSKPVLIATAVAERGLDIKGVDHVINYDMPDNIDDYIHRIGRTGRVGNAGRATSFISEDCNLLSELVRVLSDADQLVPEWMQGASGGNFGASFGFESSVPTQKQDEDCW.

The segment at 212-435 (HESGFGGGKS…SGFGGGNDGG (224 aa)) is disordered. Gly residues predominate over residues 215–250 (GFGGGKSGGFGGGNSGGSGFGSGGNSNGFGSGGGGQ). The segment covering 256–267 (NNNCFNCQQPGH) has biased composition (polar residues). 2 consecutive CCHC-type zinc fingers follow at residues 257–274 (NNCFNCQQPGHRSNDCPE) and 282–299 (RVCYNCQQPGHNSRDCPE). 2 stretches are compositionally biased toward basic and acidic residues: residues 268–282 (RSNDCPEPKKEREPR) and 293–307 (NSRDCPEERKPREGR). Positions 309–364 (GFTGGSSGFGGGNGGGTGFDSGLTNGFGSGNNGESGFGSGGFGGNSNGFGSGGGGQ) are enriched in gly residues. Residues 370-381 (NNNCFNCQQPGH) are compositionally biased toward polar residues. 2 CCHC-type zinc fingers span residues 371–388 (NNCFNCQQPGHRSNDCPE) and 396–413 (RVCYNCQQPGHNSRDCPE). Basic and acidic residues-rich tracts occupy residues 382–396 (RSNDCPEPKKEREPR) and 407–421 (NSRDCPEERKPREGR). Residues 426-435 (SGFGGGNDGG) are compositionally biased toward gly residues. CCHC-type zinc fingers lie at residues 453 to 470 (MKCFNCKGEGHRSAECPE) and 473 to 490 (RGCFNCGEQGHRSNECPN). The short motif at 552 to 580 (KTFSEANLGETMKKNVAHAGYTKTTPIQQ) is the Q motif element. The Helicase ATP-binding domain occupies 583–767 (LPLIHQGHDI…RNHLKEGYIM (185 aa)). 596–603 (AQTGSGKT) contacts ATP. A DEAD box motif is present at residues 710-713 (DEAD). Positions 803-950 (DIDSYTTEKN…LVPEWMQGAS (148 aa)) constitute a Helicase C-terminal domain.

It belongs to the DEAD box helicase family. DDX4/VASA subfamily. As to quaternary structure, interacts (via C-terminus) with kgb-1.

The enzyme catalyses ATP + H2O = ADP + phosphate + H(+). Functionally, probable ATP-binding RNA helicase. This Caenorhabditis elegans protein is ATP-dependent RNA helicase glh-2 (glh-2).